Reading from the N-terminus, the 45-residue chain is Defensin Tk-AMP-D4 (45 aa).

4 disulfides stabilise this stretch: cysteine 3–cysteine 45, cysteine 14–cysteine 34, cysteine 20–cysteine 39, and cysteine 24–cysteine 41.

Plant defense peptide. The sequence is that of Defensin Tk-AMP-D4 from Triticum kiharae (Wheat).